Here is a 286-residue protein sequence, read N- to C-terminus: Urease accessory protein UreD (286 aa).

This sequence belongs to the UreD family. UreD, UreF and UreG form a complex that acts as a GTP-hydrolysis-dependent molecular chaperone, activating the urease apoprotein by helping to assemble the nickel containing metallocenter of UreC. The UreE protein probably delivers the nickel.

It is found in the cytoplasm. Its function is as follows. Required for maturation of urease via the functional incorporation of the urease nickel metallocenter. The chain is Urease accessory protein UreD from Rhodopseudomonas palustris (strain BisA53).